Here is a 373-residue protein sequence, read N- to C-terminus: Flagellar P-ring protein 1 (373 aa).

Residues 1 to 24 (MRGISRLYWSLVLICFAFAPIVEA) form the signal peptide.

It belongs to the FlgI family. As to quaternary structure, the basal body constitutes a major portion of the flagellar organelle and consists of four rings (L,P,S, and M) mounted on a central rod.

It is found in the periplasm. The protein localises to the bacterial flagellum basal body. Its function is as follows. Assembles around the rod to form the L-ring and probably protects the motor/basal body from shearing forces during rotation. This chain is Flagellar P-ring protein 1, found in Hahella chejuensis (strain KCTC 2396).